Consider the following 197-residue polypeptide: Imidazoleglycerol-phosphate dehydratase (197 aa).

It belongs to the imidazoleglycerol-phosphate dehydratase family.

Its subcellular location is the cytoplasm. The enzyme catalyses D-erythro-1-(imidazol-4-yl)glycerol 3-phosphate = 3-(imidazol-4-yl)-2-oxopropyl phosphate + H2O. It participates in amino-acid biosynthesis; L-histidine biosynthesis; L-histidine from 5-phospho-alpha-D-ribose 1-diphosphate: step 6/9. This is Imidazoleglycerol-phosphate dehydratase from Halorhodospira halophila (strain DSM 244 / SL1) (Ectothiorhodospira halophila (strain DSM 244 / SL1)).